Consider the following 539-residue polypeptide: Glycerophosphoinositol inositolphosphodiesterase GDPD2 (539 aa).

The Cytoplasmic portion of the chain corresponds to 1–40 (MADSPGCCSIWARCLHCLYSCHWRKYPKQKMQTSKCDCIW). The helical transmembrane segment at 41–61 (FGLLFLTFLLSLGWLYIGLIL) threads the bilayer. Over 62–83 (LNDLHNFNEFLFRHWGHWMDWS) the chain is Extracellular. Residues 84-104 (LIVLLVVSLLVTYASLLLLLG) form a helical membrane-spanning segment. Residues 105-121 (LLLQLCGQPLHLHSLHK) lie on the Cytoplasmic side of the membrane. The helical transmembrane segment at 122–142 (VLLLLIVLLVAAGLVGLDIQW) threads the bilayer. Topologically, residues 143-154 (RQEWHSLRLSLQ) are extracellular. The helical transmembrane segment at 155–175 (ATAPFLHIGAVAGITLLAWPV) threads the bilayer. The Cytoplasmic portion of the chain corresponds to 176-189 (ADTFYRIHPRGPKV). A helical transmembrane segment spans residues 190–210 (LLLLLFFGVTLVIYLMPLLFI). At 211 to 491 (SSPCIMKLRD…PLWLLPPQKY (281 aa)) the chain is on the extracellular side. A GP-PDE domain is found at 225–480 (PGLVGHRGAP…NACQLLQQMQ (256 aa)). Positions 257, 259, and 272 each coordinate a divalent metal cation. N-linked (GlcNAc...) asparagine glycosylation is present at asparagine 333. A helical membrane pass occupies residues 492–512 (LMIWVITDCASILLLLSIFLL). Residues 513–539 (RGGCAKRNRTGLETAVLLTKINNFASE) lie on the Cytoplasmic side of the membrane.

This sequence belongs to the glycerophosphoryl diester phosphodiesterase family. The cofactor is Ca(2+). Detected in spleen, femur and calvaria.

It localises to the cell membrane. It is found in the cytoplasm. The protein resides in the cytoskeleton. It catalyses the reaction sn-glycero-3-phospho-1D-myo-inositol + H2O = 1D-myo-inositol 1-phosphate + glycerol + H(+). Functionally, has glycerophosphoinositol inositolphosphodiesterase activity and specifically hydrolyzes glycerophosphoinositol, with no activity for other substrates such as glycerophosphoinositol 4-phosphate, glycerophosphocholine, glycerophosphoethanolamine, and glycerophosphoserine. Accelerates the program of osteoblast differentiation and growth. May play a role in remodeling of the actin cytoskeleton. The chain is Glycerophosphoinositol inositolphosphodiesterase GDPD2 (Gdpd2) from Mus musculus (Mouse).